The following is a 163-amino-acid chain: Globin CTT-Z (163 aa).

The N-terminal stretch at 1–16 (MKFFAVLALCIVGAIA) is a signal peptide. The Globin domain maps to 18–162 (PLTSDEAALV…VYTAVFQIVT (145 aa)). Heme b contacts are provided by H76 and H111.

It belongs to the globin family.

This is Globin CTT-Z (CTT-Z) from Chironomus thummi thummi (Midge).